Reading from the N-terminus, the 145-residue chain is MEITKEIFSLIAAVMLLLGSFIALISAIGIVKFQDVFLRSHAATKSSTLSVLLTLIGVLIYFIVNTGFFSVRLLLSLVFINLTSPVGMHLVARAAYRNGAYMYRKNDAHTHASILLSSNEQNSTEALQLRAKKREEHRKKWYQND.

3 helical membrane-spanning segments follow: residues Ile11 to Val31, Val51 to Val71, and Arg72 to Ala92.

Belongs to the CPA3 antiporters (TC 2.A.63) subunit G family. In terms of assembly, may form a heterooligomeric complex that consists of seven subunits: mnhA2, mnhB2, mnhC2, mnhD2, mnhE2, mnhF2 and mnhG2.

The protein resides in the cell membrane. This Staphylococcus aureus (strain JH9) protein is Putative antiporter subunit mnhG2 (mnhG2).